A 442-amino-acid chain; its full sequence is Transposase InsG for insertion sequence element IS4 (442 aa).

Belongs to the transposase 11 family.

Functionally, involved in the transposition of the insertion sequence IS4. In Escherichia coli (strain K12), this protein is Transposase InsG for insertion sequence element IS4 (insG).